A 204-amino-acid chain; its full sequence is Methylthioribulose-1-phosphate dehydratase (204 aa).

2 residues coordinate Zn(2+): H94 and H96.

It belongs to the aldolase class II family. MtnB subfamily. Requires Zn(2+) as cofactor.

It catalyses the reaction 5-(methylsulfanyl)-D-ribulose 1-phosphate = 5-methylsulfanyl-2,3-dioxopentyl phosphate + H2O. The protein operates within amino-acid biosynthesis; L-methionine biosynthesis via salvage pathway; L-methionine from S-methyl-5-thio-alpha-D-ribose 1-phosphate: step 2/6. Its function is as follows. Catalyzes the dehydration of methylthioribulose-1-phosphate (MTRu-1-P) into 2,3-diketo-5-methylthiopentyl-1-phosphate (DK-MTP-1-P). This chain is Methylthioribulose-1-phosphate dehydratase, found in Pseudomonas syringae pv. syringae (strain B728a).